The chain runs to 177 residues: B-phycoerythrin beta chain (177 aa).

(2R,3E)-phycoerythrobilin contacts are provided by residues Lys28, Asn35, Asp39, Cys50, Asp54, Cys61, Asn72, 77 to 78 (RR), Cys82, Arg129, 147 to 148 (SQ), 154 to 158 (PQGDC), and Cys158. An N4-methylasparagine modification is found at Asn72.

It belongs to the phycobiliprotein family. As to quaternary structure, heterotetramer of 2 different alpha chains and 2 identical beta chains. The subunit composition could comprise any combination of 2 out of 4 different alpha units with an invariant beta unit. Contains three covalently linked phycoerythrobilin chromophores.

The protein localises to the plastid. Its subcellular location is the chloroplast thylakoid membrane. Its function is as follows. Light-harvesting photosynthetic tetrapyrrole chromophore-protein from the phycobiliprotein complex. The polypeptide is B-phycoerythrin beta chain (cpeB) (Rhodomonas sp. (strain CS 24) (Chroomonas sp. (strain CS24))).